The following is a 164-amino-acid chain: HTH-type transcriptional regulator IscR (164 aa).

One can recognise an HTH rrf2-type domain in the interval 2 to 131 (RLTSKGRYAV…NNITLAELVN (130 aa)). A DNA-binding region (H-T-H motif) is located at residues 28–51 (LADISERQGISLSYLEQLFSRLRK). Residues Cys-92, Cys-98, and Cys-104 each coordinate [2Fe-2S] cluster. A metal cation contacts are provided by Cys-92, Cys-98, and Cys-104. Residues 145–164 (DTRRTANGRPQETINVNLRA) are disordered. Residues 152–164 (GRPQETINVNLRA) are compositionally biased toward polar residues.

Requires [2Fe-2S] cluster as cofactor.

Regulates the transcription of several operons and genes involved in the biogenesis of Fe-S clusters and Fe-S-containing proteins. The sequence is that of HTH-type transcriptional regulator IscR from Serratia proteamaculans (strain 568).